A 282-amino-acid polypeptide reads, in one-letter code: MTVLPDSENGYLLNYEDQEKRRMNMQHDLIKTYMGKLILAPLPFDQPNLRVLDSGTFNGLWLEDASTLLQSPTLVGTDVSPTAFPAKRPPNTEFHVQSISDPWPTEWRDSFDLVHQKLVIACVPPDEGRQALYRLIDLAKPGTGWVQFTEGSLEHLTPEQRKQYPVLARFQSLVAEMLPHFRWNPRPGKLVRQWLEEYGLQEVQEKVMEIPIGAGNPDPKLGEMAKQNMLEVVSNFRTAATRLPDGTGIRAEDFDPILRDIKVEFETVGGILRFNTVWGRRP.

This sequence belongs to the methyltransferase superfamily. LaeA methyltransferase family.

It functions in the pathway mycotoxin biosynthesis. In terms of biological role, N-methyltransferase; part of the gene cluster that mediates the biosynthesis of gliotoxin, a member of the epipolythiodioxopiperazine (ETP) class of toxins characterized by a disulfide bridged cyclic dipeptide. The first step in gliotoxin biosynthesis is the condensation of serine and phenylalanine to form the cyclo-L-phenylalanyl-L-serine diketopiperazine (DKP) by the NRPS gliP. GliP is also able to produce the DKP cyclo-L-tryptophanyl-L-serine, suggesting that the substrate specificity of the first adenylation (A) domain in gliP is sufficiently relaxed to accommodate both L-Phe and L-Trp. The cytochrome P450 monooxygenase gliC has been shown to catalyze the subsequent hydroxylation of the alpha-carbon of L-Phe in cyclo-L-phenylalanyl-L-serine whereas the second cytochrome P450 enzyme, gliF, is presumably involved in the modification of the DKP side chain. The glutathione S-transferase (GST) gliG then forms a bis-glutathionylated biosynthetic intermediate which is responsible for the sulfurization of gliotoxin. This bis-glutathionylated intermediate is subsequently processed by the gamma-glutamyl cyclotransferase gliK to remove both gamma-glutamyl moieties. Subsequent processing via gliI yields a biosynthetic intermediate, which is N-methylated via the N-methyltransferase gliN, before the gliotoxin oxidoreductase gliT-mediated disulfide bridge closure. GliN-mediated amide methylation confers stability to ETP, damping the spontaneous formation of tri- and tetrasulfides. Intracellular dithiol gliotoxin oxidized by gliT is subsequently effluxed by gliA. Gliotoxin contributes to pathogenesis during invasive aspergillosis. In macrophages and neutrophils, gliotoxin showed inhibition of various different cell functions including cytokine production, antigen presentation, phagocytosis, and production of reactive oxygen species. This chain is N-methyltransferase gliN, found in Aspergillus fumigatus (strain ATCC MYA-4609 / CBS 101355 / FGSC A1100 / Af293) (Neosartorya fumigata).